Here is a 197-residue protein sequence, read N- to C-terminus: Secreted RxLR effector protein 48 (197 aa).

A signal peptide spans 1 to 27 (MCCVSWNWVLACTFLLIFLSWWNCCND). The RxLR-dEER signature appears at 58-79 (RLLRVNLAANAEVLTHEIEEEK).

This sequence belongs to the RxLR effector family.

The protein resides in the secreted. It is found in the host nucleus. The protein localises to the host cytoplasm. Functionally, secreted effector that completely suppresses the host cell death induced by cell death-inducing proteins. In Plasmopara viticola (Downy mildew of grapevine), this protein is Secreted RxLR effector protein 48.